The primary structure comprises 159 residues: Phosphopantetheine adenylyltransferase (159 aa).

Ser-9 provides a ligand contact to substrate. ATP is bound by residues 9–10 (SF) and His-17. Substrate contacts are provided by Lys-41, Leu-73, and Lys-87. ATP-binding positions include 88 to 90 (GLR), Glu-98, and 123 to 129 (YSYLSSS).

It belongs to the bacterial CoaD family. Homohexamer. The cofactor is Mg(2+).

The protein resides in the cytoplasm. The enzyme catalyses (R)-4'-phosphopantetheine + ATP + H(+) = 3'-dephospho-CoA + diphosphate. Its pathway is cofactor biosynthesis; coenzyme A biosynthesis; CoA from (R)-pantothenate: step 4/5. Functionally, reversibly transfers an adenylyl group from ATP to 4'-phosphopantetheine, yielding dephospho-CoA (dPCoA) and pyrophosphate. The chain is Phosphopantetheine adenylyltransferase from Clostridium botulinum (strain Eklund 17B / Type B).